A 328-amino-acid chain; its full sequence is Solute-binding protein Bamb_6123 (328 aa).

Positions 1 to 26 (MTHRFPRSRTALAVALMAGFAMSAQA) are cleaved as a signal peptide. Positions 35, 73, 89, 149, 209, and 236 each coordinate beta-D-galacturonate. His35, Glu73, Arg89, Arg149, Asn209, and Glu236 together coordinate beta-D-glucuronate.

Belongs to the bacterial solute-binding protein 7 family. As to quaternary structure, the complex is comprised of an extracytoplasmic solute-binding protein and a heteromeric permease formed by two transmembrane proteins.

The protein resides in the periplasm. Functionally, solute-binding protein that binds D-galacturonate and D-glucuronate (in vitro). Probably part of a tripartite ATP-independent periplasmic (TRAP) transport system that mediates solute transport into the cytoplasm. This is Solute-binding protein Bamb_6123 from Burkholderia ambifaria (strain ATCC BAA-244 / DSM 16087 / CCUG 44356 / LMG 19182 / AMMD) (Burkholderia cepacia (strain AMMD)).